Consider the following 172-residue polypeptide: Peptidyl-tRNA hydrolase (172 aa).

Tyrosine 10 is a tRNA binding site. The Proton acceptor role is filled by histidine 15. TRNA-binding residues include phenylalanine 59, asparagine 61, and asparagine 101.

Belongs to the PTH family. Monomer.

It localises to the cytoplasm. The catalysed reaction is an N-acyl-L-alpha-aminoacyl-tRNA + H2O = an N-acyl-L-amino acid + a tRNA + H(+). Hydrolyzes ribosome-free peptidyl-tRNAs (with 1 or more amino acids incorporated), which drop off the ribosome during protein synthesis, or as a result of ribosome stalling. Its function is as follows. Catalyzes the release of premature peptidyl moieties from peptidyl-tRNA molecules trapped in stalled 50S ribosomal subunits, and thus maintains levels of free tRNAs and 50S ribosomes. The chain is Peptidyl-tRNA hydrolase from Rubrobacter xylanophilus (strain DSM 9941 / JCM 11954 / NBRC 16129 / PRD-1).